The chain runs to 455 residues: Phosphoglucosamine mutase (455 aa).

The active-site Phosphoserine intermediate is the serine 104. Positions 104, 243, 245, and 247 each coordinate Mg(2+). A Phosphoserine modification is found at serine 104.

This sequence belongs to the phosphohexose mutase family. Mg(2+) is required as a cofactor. Post-translationally, activated by phosphorylation.

The enzyme catalyses alpha-D-glucosamine 1-phosphate = D-glucosamine 6-phosphate. Catalyzes the conversion of glucosamine-6-phosphate to glucosamine-1-phosphate. This is Phosphoglucosamine mutase from Synechococcus sp. (strain CC9311).